Here is a 161-residue protein sequence, read N- to C-terminus: Nucleotide-binding protein Dtpsy_2240 (161 aa).

This sequence belongs to the YajQ family.

In terms of biological role, nucleotide-binding protein. This chain is Nucleotide-binding protein Dtpsy_2240, found in Acidovorax ebreus (strain TPSY) (Diaphorobacter sp. (strain TPSY)).